Consider the following 480-residue polypeptide: Protein nucleotidyltransferase YdiU (480 aa).

The ATP site is built by Gly-86, Gly-88, Arg-89, Lys-109, Asp-121, Gly-122, Arg-172, and Arg-179. Residue Asp-248 is the Proton acceptor of the active site. Mg(2+) contacts are provided by Asn-249 and Asp-258. Asp-258 is an ATP binding site.

Belongs to the SELO family. Mg(2+) is required as a cofactor. The cofactor is Mn(2+).

It catalyses the reaction L-seryl-[protein] + ATP = 3-O-(5'-adenylyl)-L-seryl-[protein] + diphosphate. The enzyme catalyses L-threonyl-[protein] + ATP = 3-O-(5'-adenylyl)-L-threonyl-[protein] + diphosphate. The catalysed reaction is L-tyrosyl-[protein] + ATP = O-(5'-adenylyl)-L-tyrosyl-[protein] + diphosphate. It carries out the reaction L-histidyl-[protein] + UTP = N(tele)-(5'-uridylyl)-L-histidyl-[protein] + diphosphate. It catalyses the reaction L-seryl-[protein] + UTP = O-(5'-uridylyl)-L-seryl-[protein] + diphosphate. The enzyme catalyses L-tyrosyl-[protein] + UTP = O-(5'-uridylyl)-L-tyrosyl-[protein] + diphosphate. Nucleotidyltransferase involved in the post-translational modification of proteins. It can catalyze the addition of adenosine monophosphate (AMP) or uridine monophosphate (UMP) to a protein, resulting in modifications known as AMPylation and UMPylation. In Salmonella paratyphi A (strain ATCC 9150 / SARB42), this protein is Protein nucleotidyltransferase YdiU.